Reading from the N-terminus, the 222-residue chain is Ribosomal RNA small subunit methyltransferase G (222 aa).

Residues Gly73, Leu78, Ala124 to Glu125, and Arg137 contribute to the S-adenosyl-L-methionine site.

The protein belongs to the methyltransferase superfamily. RNA methyltransferase RsmG family.

It localises to the cytoplasm. Specifically methylates the N7 position of guanine in position 518 of 16S rRNA. The sequence is that of Ribosomal RNA small subunit methyltransferase G from Acidothermus cellulolyticus (strain ATCC 43068 / DSM 8971 / 11B).